The chain runs to 256 residues: Thiazole synthase (256 aa).

Lysine 95 acts as the Schiff-base intermediate with DXP in catalysis. 1-deoxy-D-xylulose 5-phosphate contacts are provided by residues glycine 156, 182–183 (AG), and 204–205 (NT).

The protein belongs to the ThiG family. Homotetramer. Forms heterodimers with either ThiH or ThiS.

Its subcellular location is the cytoplasm. It carries out the reaction [ThiS sulfur-carrier protein]-C-terminal-Gly-aminoethanethioate + 2-iminoacetate + 1-deoxy-D-xylulose 5-phosphate = [ThiS sulfur-carrier protein]-C-terminal Gly-Gly + 2-[(2R,5Z)-2-carboxy-4-methylthiazol-5(2H)-ylidene]ethyl phosphate + 2 H2O + H(+). It functions in the pathway cofactor biosynthesis; thiamine diphosphate biosynthesis. Catalyzes the rearrangement of 1-deoxy-D-xylulose 5-phosphate (DXP) to produce the thiazole phosphate moiety of thiamine. Sulfur is provided by the thiocarboxylate moiety of the carrier protein ThiS. In vitro, sulfur can be provided by H(2)S. This chain is Thiazole synthase, found in Escherichia coli (strain K12 / MC4100 / BW2952).